A 193-amino-acid polypeptide reads, in one-letter code: Holliday junction branch migration complex subunit RuvA (193 aa).

The domain I stretch occupies residues 1 to 64; the sequence is MITSLTGTIL…EDAHLLYGFM (64 aa). The domain II stretch occupies residues 65 to 139; sequence TVAERDMFRL…DKMGGIAPGP (75 aa). Positions 139-143 are flexible linker; it reads PMGRG. The domain III stretch occupies residues 144-193; the sequence is GAGDPRQEAIAALLTLGYKPAQASQAIAGLADGLGLEDLIRQSLQNLSRH.

It belongs to the RuvA family. In terms of assembly, homotetramer. Forms an RuvA(8)-RuvB(12)-Holliday junction (HJ) complex. HJ DNA is sandwiched between 2 RuvA tetramers; dsDNA enters through RuvA and exits via RuvB. An RuvB hexamer assembles on each DNA strand where it exits the tetramer. Each RuvB hexamer is contacted by two RuvA subunits (via domain III) on 2 adjacent RuvB subunits; this complex drives branch migration. In the full resolvosome a probable DNA-RuvA(4)-RuvB(12)-RuvC(2) complex forms which resolves the HJ.

It is found in the cytoplasm. Functionally, the RuvA-RuvB-RuvC complex processes Holliday junction (HJ) DNA during genetic recombination and DNA repair, while the RuvA-RuvB complex plays an important role in the rescue of blocked DNA replication forks via replication fork reversal (RFR). RuvA specifically binds to HJ cruciform DNA, conferring on it an open structure. The RuvB hexamer acts as an ATP-dependent pump, pulling dsDNA into and through the RuvAB complex. HJ branch migration allows RuvC to scan DNA until it finds its consensus sequence, where it cleaves and resolves the cruciform DNA. This chain is Holliday junction branch migration complex subunit RuvA, found in Acidithiobacillus ferrooxidans (strain ATCC 53993 / BNL-5-31) (Leptospirillum ferrooxidans (ATCC 53993)).